The sequence spans 494 residues: V-type proton ATPase subunit B (494 aa).

Arginine 384 is a binding site for ATP.

This sequence belongs to the ATPase alpha/beta chains family. V-ATPase is a heteromultimeric enzyme made up of two complexes: the ATP-hydrolytic V1 complex and the proton translocation V0 complex. The V1 complex consists of three catalytic AB heterodimers that form a heterohexamer, three peripheral stalks each consisting of EG heterodimers, one central rotor including subunits D and F, and the regulatory subunits C and H. The proton translocation complex V0 consists of the proton transport subunit a, a ring of proteolipid subunits c9c'', rotary subunit d, subunits e and f, and the accessory subunits VhaAC45 and ATP6AP2.

Functionally, non-catalytic subunit of the V1 complex of vacuolar(H+)-ATPase (V-ATPase), a multisubunit enzyme composed of a peripheral complex (V1) that hydrolyzes ATP and a membrane integral complex (V0) that translocates protons. V-ATPase is responsible for acidifying and maintaining the pH of intracellular compartments and in some cell types, is targeted to the plasma membrane, where it is responsible for acidifying the extracellular environment. Essential for the proper assembly and activity of V-ATPase. This Heliothis virescens (Tobacco budworm moth) protein is V-type proton ATPase subunit B (VHA55).